A 207-amino-acid polypeptide reads, in one-letter code: Imidazoleglycerol-phosphate dehydratase (207 aa).

The protein belongs to the imidazoleglycerol-phosphate dehydratase family.

The protein localises to the cytoplasm. The catalysed reaction is D-erythro-1-(imidazol-4-yl)glycerol 3-phosphate = 3-(imidazol-4-yl)-2-oxopropyl phosphate + H2O. It participates in amino-acid biosynthesis; L-histidine biosynthesis; L-histidine from 5-phospho-alpha-D-ribose 1-diphosphate: step 6/9. In Mycobacterium avium (strain 104), this protein is Imidazoleglycerol-phosphate dehydratase.